A 356-amino-acid polypeptide reads, in one-letter code: uncharacterized protein (356 aa).

37-44 (TGASSGIG) provides a ligand contact to NADP(+). Serine 168 is a binding site for substrate. Residue tyrosine 181 is the Proton acceptor of the active site.

Belongs to the short-chain dehydrogenases/reductases (SDR) family.

This is an uncharacterized protein from Bacillus subtilis (strain 168).